Consider the following 542-residue polypeptide: Protein lin-9 homolog (542 aa).

Alanine 2 is modified (N-acetylalanine). The tract at residues 2–296 (AELDQLPDES…QKQRPSRFFM (295 aa)) is sufficient for interaction with RB1. Lysine 21 is covalently cross-linked (Glycyl lysine isopeptide (Lys-Gly) (interchain with G-Cter in SUMO2)). Residues serine 65 and serine 95 each carry the phosphoserine modification. 2 positions are modified to phosphothreonine: threonine 96 and threonine 304. Serine 309 and serine 321 each carry phosphoserine. Positions 354–413 (MIKKEHIKKLREMNTEAEKLKSYSMPISIEFQRRYATIVLELEQLNKDLNKVLHKVQQYC) form a coiled coil.

The protein belongs to the lin-9 family. In terms of assembly, component of the DREAM complex (also named LINC complex) at least composed of E2F4, E2F5, LIN9, LIN37, LIN52, LIN54, MYBL1, MYBL2, RBL1, RBL2, RBBP4, TFDP1 and TFDP2. The complex exists in quiescent cells where it represses cell cycle-dependent genes. It dissociates in S phase when LIN9, LIN37, LIN52 and LIN54 form a subcomplex that binds to MYBL2. Interacts with RB1. Expressed in thymus and testis.

It localises to the nucleus. The protein resides in the nucleoplasm. In terms of biological role, acts as a tumor suppressor. Inhibits DNA synthesis. Its ability to inhibit oncogenic transformation is mediated through its association with RB1. Plays a role in the expression of genes required for the G1/S transition. The sequence is that of Protein lin-9 homolog (LIN9) from Homo sapiens (Human).